The primary structure comprises 148 residues: SsrA-binding protein (148 aa).

A disordered region spans residues 123–148 (KLHDKRETEKKRDWEREKARIMRSAT). Residues 126 to 142 (DKRETEKKRDWEREKAR) are compositionally biased toward basic and acidic residues.

It belongs to the SmpB family.

It localises to the cytoplasm. Required for rescue of stalled ribosomes mediated by trans-translation. Binds to transfer-messenger RNA (tmRNA), required for stable association of tmRNA with ribosomes. tmRNA and SmpB together mimic tRNA shape, replacing the anticodon stem-loop with SmpB. tmRNA is encoded by the ssrA gene; the 2 termini fold to resemble tRNA(Ala) and it encodes a 'tag peptide', a short internal open reading frame. During trans-translation Ala-aminoacylated tmRNA acts like a tRNA, entering the A-site of stalled ribosomes, displacing the stalled mRNA. The ribosome then switches to translate the ORF on the tmRNA; the nascent peptide is terminated with the 'tag peptide' encoded by the tmRNA and targeted for degradation. The ribosome is freed to recommence translation, which seems to be the essential function of trans-translation. In Burkholderia pseudomallei (strain 1710b), this protein is SsrA-binding protein.